The sequence spans 256 residues: Protein crossbronx-like (256 aa).

In terms of domain architecture, UBC core spans 17-179 (NQGYQVLAEY…AKASIVWSWK (163 aa)).

This sequence belongs to the ubiquitin-conjugating enzyme family. FTS subfamily.

This chain is Protein crossbronx-like, found in Drosophila mojavensis (Fruit fly).